A 739-amino-acid polypeptide reads, in one-letter code: Cellulose synthase catalytic subunit [UDP-forming] (739 aa).

The next 4 membrane-spanning stretches (helical) occupy residues 36 to 55, 59 to 76, 83 to 101, and 116 to 138; these read VLVV…IISA, LYSQ…VLVL, LAIL…RYMF, and MFFG…FGYV. The segment at 157-250 is catalytic subdomain A; it reads EWPTVDVFIP…YIALFDADHV (94 aa). D199 is a catalytic residue. The substrate site is built by D246 and D248. A catalytic subdomain B region spans residues 327 to 387; sequence EPLLEIGGVA…NQRIRWARGM (61 aa). The active site involves D343. Transmembrane regions (helical) follow at residues 417–436, 440–462, 524–546, and 551–573; these read FFYG…YLIF, IFHA…SSLT, PYLV…LIWG, and AVTV…AAVA. A PilZ domain is found at 580–677; sequence QVRSEPRVSA…QSELVRLTFS (98 aa).

It belongs to the glycosyltransferase 2 family. Mg(2+) serves as cofactor.

Its subcellular location is the cell inner membrane. It carries out the reaction [(1-&gt;4)-beta-D-glucosyl](n) + UDP-alpha-D-glucose = [(1-&gt;4)-beta-D-glucosyl](n+1) + UDP + H(+). The protein operates within glycan metabolism; bacterial cellulose biosynthesis. Activated by bis-(3'-5') cyclic diguanylic acid (c-di-GMP). Functionally, catalytic subunit of cellulose synthase. It polymerizes uridine 5'-diphosphate glucose to cellulose, which is produced as an extracellular component responsible for the structural integrity and rigidity of self-supporting mats characteristic of the 'wrinkly spreader' phenotype. The polypeptide is Cellulose synthase catalytic subunit [UDP-forming] (bcsA) (Pseudomonas fluorescens (strain SBW25)).